The sequence spans 154 residues: Large ribosomal subunit protein uL15 (154 aa).

Positions 1 to 61 are disordered; the sequence is MDLSTLKPVA…GGQMPLMRRM (61 aa).

The protein belongs to the universal ribosomal protein uL15 family. As to quaternary structure, part of the 50S ribosomal subunit.

Functionally, binds to the 23S rRNA. This Oenococcus oeni (strain ATCC BAA-331 / PSU-1) protein is Large ribosomal subunit protein uL15.